The following is a 79-amino-acid chain: DNA-directed RNA polymerase subunit omega (79 aa).

This sequence belongs to the RNA polymerase subunit omega family. In terms of assembly, in cyanobacteria the RNAP catalytic core is composed of 2 alpha, 1 beta, 1 beta', 1 gamma and 1 omega subunit. When a sigma factor is associated with the core the holoenzyme is formed, which can initiate transcription.

It catalyses the reaction RNA(n) + a ribonucleoside 5'-triphosphate = RNA(n+1) + diphosphate. Promotes RNA polymerase assembly. Latches the N- and C-terminal regions of the beta' subunit thereby facilitating its interaction with the beta and alpha subunits. The protein is DNA-directed RNA polymerase subunit omega of Synechococcus sp. (strain JA-3-3Ab) (Cyanobacteria bacterium Yellowstone A-Prime).